The chain runs to 1340 residues: Lysine-specific demethylase ELF6 (1340 aa).

Residues 16–57 (APVFRPTDTEFADPIAYISKIEKEASAFGICKIIPPLPKPSK) enclose the JmjN domain. The interval 195 to 245 (QRKRRGRGFYQRKTENNDPSGKNGEKSSPEVEKAPLASTSLSSQDSSKQKN) is disordered. The span at 217–227 (NGEKSSPEVEK) shows a compositional bias: basic and acidic residues. The 167-residue stretch at 262–428 (NSSWNLQMIA…VAKEAAVRRA (167 aa)) folds into the JmjC domain. Residues His-305, Glu-307, and His-396 each coordinate Fe cation. Positions 818–825 (GKKEEKII) match the Nuclear localization signal 1 motif. The segment at 1092–1225 (GEPLESSDIL…SRQQEVPTTT (134 aa)) is disordered. A compositionally biased stretch (polar residues) spans 1099–1115 (DILSSSNGDEASSNGLQ). Over residues 1124–1133 (ESEVSSSENT) the composition is skewed to low complexity. Over residues 1188–1201 (SLKHTETSDEEKKP) the composition is skewed to basic and acidic residues. The span at 1215-1225 (GSRQQEVPTTT) shows a compositional bias: polar residues. 4 C2H2-type zinc fingers span residues 1228 to 1250 (NRCY…THKR), 1251 to 1275 (NRCT…QRVH), 1281 to 1305 (FECS…LRLH), and 1311 to 1337 (YICK…KTMH). Residues Cys-1230, Cys-1235, His-1248, Cys-1253, Cys-1258, His-1265, His-1271, His-1275, Cys-1283, Cys-1288, His-1301, His-1305, Cys-1313, Cys-1318, His-1331, and His-1337 each contribute to the Zn(2+) site. The Nuclear localization signal 2 signature appears at 1248–1255 (HKRNRCTH). Residues 1260-1333 (KKFRAHKYLV…FVSDYSRHRR (74 aa)) are DNA-binding.

The protein belongs to the JHDM3 histone demethylase family. As to quaternary structure, interacts with BZR2 (via N-terminus). Expressed at low levels in seedlings, cotyledons and leaves. Detected in inflorescences, stems, roots and siliques but not in shoot apical meristems or root tips. Accumulates in flowers and embryos.

Its subcellular location is the nucleus. The catalysed reaction is N(6),N(6),N(6)-trimethyl-L-lysyl(27)-[histone H3] + 2-oxoglutarate + O2 = N(6),N(6)-dimethyl-L-lysyl(27)-[histone H3] + formaldehyde + succinate + CO2. It carries out the reaction N(6),N(6)-dimethyl-L-lysyl(27)-[histone H3] + 2-oxoglutarate + O2 = N(6)-methyl-L-lysyl(27)-[histone H3] + formaldehyde + succinate + CO2. In terms of biological role, histone demethylase that demethylates 'Lys-27' (H3K27me) of histone H3, thus acting as a positive regulator of gene expression. Demethylates tri-methylated (H3K27me3) and di-methylated (H3K27me2) H3K27me. Inactive on H3K27me1, H3K4me3, H3K9me2 and H3K36me3. Acts as a repressor of the photoperiodic flowering pathway and of FT. May also be active on H3K4me. Binds around the transcription start site of the FT locus. Required for epigenetic reprogramming by resetting the expression of the floral repressor FLC locus, thus aluviating cold-mediated FLC epigenetically silencing occurring during vernalization and preventing inapropriate epigenetic states inheritence. Functionally, together with REF6, required for H3K27me3 resetting (especially in constitutive heterochromatin within the pericentromeric regions) and transgenerational inheritance of histone marks, thus acting in safeguarding genome and epigenome integrity during sexual reproduction. The sequence is that of Lysine-specific demethylase ELF6 from Arabidopsis thaliana (Mouse-ear cress).